The sequence spans 3010 residues: Genome polyprotein (3010 aa).

Serine 2 carries the N-acetylserine; by host modification. Positions serine 2–lysine 23 are interaction with STAT1. The segment at serine 2–proline 58 is interaction with EIF2AK2/PKR. Residues serine 2–arginine 59 are interaction with DDX3X. Residues serine 2–alanine 75 are disordered. At serine 2 to asparagine 168 the chain is on the cytoplasmic side. 4 consecutive short sequence motifs (nuclear localization signal) follow at residues glycine 5 to arginine 13, proline 38 to arginine 43, proline 58 to proline 64, and proline 66 to proline 71. Basic residues predominate over residues proline 7–asparagine 16. Serine 99 bears the Phosphoserine; by host mark. An important for endoplasmic reticulum and mitochondrial localization region spans residues proline 112–alanine 152. Serine 116 is modified (phosphoserine; by host PKA). Residues valine 122 to serine 173 are interaction with APOA2. The important for lipid droplets localization stretch occupies residues tyrosine 164–glycine 167. Residues leucine 169–alanine 189 traverse the membrane as a helical segment. Residues leucine 178–alanine 191 constitute a propeptide, ER anchor for the core protein, removed in mature form by host signal peptidase. Residues serine 190–glycine 358 are Lumenal-facing. N-linked (GlcNAc...) asparagine; by host glycans are attached at residues asparagine 196, asparagine 209, asparagine 234, and asparagine 250. The tract at residues leucine 265–arginine 296 is important for fusion. N-linked (GlcNAc...) asparagine; by host glycosylation occurs at asparagine 305. The chain crosses the membrane as a helical span at residues leucine 359–alanine 379. Residues glycine 380–leucine 725 are Lumenal-facing. Residues threonine 385–isoleucine 411 form an HVR1 region. Asparagine 417, asparagine 423, asparagine 430, and asparagine 448 each carry an N-linked (GlcNAc...) (high mannose) asparagine; by host glycan. 4 disulfides stabilise this stretch: cysteine 429/cysteine 552, cysteine 452/cysteine 459, cysteine 486/cysteine 494, and cysteine 503/cysteine 508. The tract at residues tyrosine 474 to isoleucine 479 is HVR2. Positions glutamine 480 to proline 493 are CD81-binding 1. The N-linked (GlcNAc...) (high mannose) asparagine; by host glycan is linked to asparagine 532. Asparagine 540 carries N-linked (GlcNAc...) asparagine; by host glycosylation. The interval proline 544–glycine 551 is CD81-binding 2. Asparagine 556 carries N-linked (GlcNAc...) (high mannose) asparagine; by host glycosylation. Cysteines 564 and 569 form a disulfide. N-linked (GlcNAc...) (high mannose) asparagine; by host glycosylation occurs at asparagine 576. 3 disulfides stabilise this stretch: cysteine 581–cysteine 585, cysteine 597–cysteine 620, and cysteine 607–cysteine 644. 2 N-linked (GlcNAc...) (high mannose) asparagine; by host glycosylation sites follow: asparagine 623 and asparagine 645. Residues cysteine 652 and cysteine 677 are joined by a disulfide bond. A PKR/eIF2-alpha phosphorylation homology domain (PePHD) region spans residues serine 660–glutamate 671. A helical transmembrane segment spans residues leucine 726 to alanine 746. The Lumenal portion of the chain corresponds to alanine 747–alanine 757. Residues serine 758 to isoleucine 778 traverse the membrane as a helical segment. Topologically, residues lysine 779 to arginine 781 are cytoplasmic. Residues leucine 782–leucine 803 form a helical membrane-spanning segment. Over proline 804–glutamate 813 the chain is Lumenal. Residues methionine 814 to histidine 834 traverse the membrane as a helical segment. Residues tyrosine 835 to phenylalanine 838 lie on the Cytoplasmic side of the membrane. Residues leucine 839–valine 859 traverse the membrane as a helical segment. Over tryptophan 860–tyrosine 881 the chain is Lumenal. Residues proline 882–leucine 902 form a helical membrane-spanning segment. Residues glutamine 903–leucine 1026 form the Peptidase C18 domain. Topologically, residues glutamine 903–threonine 1657 are cytoplasmic. Residues alanine 904–arginine 1206 are protease NS2-3. Cysteine 922 carries S-palmitoyl cysteine; by host lipidation. An interaction with host SCPS1 region spans residues alanine 929–valine 949. Active-site for protease NS2 activity; shared with dimeric partner residues include histidine 952, glutamate 972, and cysteine 993. The region spanning alanine 1027–proline 1208 is the Peptidase S29 domain. Catalysis depends on charge relay system; for serine protease NS3 activity residues histidine 1083 and aspartate 1107. The Zn(2+) site is built by cysteine 1123 and cysteine 1125. Residue serine 1165 is the Charge relay system; for serine protease NS3 activity of the active site. Zn(2+) is bound by residues cysteine 1171 and histidine 1175. In terms of domain architecture, Helicase ATP-binding spans proline 1217–asparagine 1369. Alanine 1230–serine 1237 is a binding site for ATP. Mg(2+)-binding residues include serine 1237 and glutamate 1317. Residues aspartate 1316 to histidine 1319 carry the DECH box motif. Positions glutamine 1486–glycine 1497 are RNA-binding. The chain crosses the membrane as a helical span at residues serine 1658–glycine 1678. The segment at serine 1679–glycine 1690 is NS3-binding. Residues serine 1679–serine 1805 lie on the Cytoplasmic side of the membrane. Residues threonine 1806 to glycine 1824 traverse the membrane as a helical segment. The Lumenal portion of the chain corresponds to alanine 1825–alanine 1828. A helical transmembrane segment spans residues phenylalanine 1829–valine 1849. Aspartate 1850 is a topological domain (cytoplasmic). Residues methionine 1851–glycine 1871 form a helical membrane-spanning segment. At glutamate 1872 to asparagine 1881 the chain is on the lumenal side. Residues leucine 1882–leucine 1902 traverse the membrane as a helical segment. The Cytoplasmic segment spans residues arginine 1903–cysteine 1972. 2 S-palmitoyl cysteine; by host lipidation sites follow: cysteine 1968 and cysteine 1972. An intramembrane segment occupies serine 1973–arginine 2002. Residues leucine 2003 to arginine 2989 lie on the Cytoplasmic side of the membrane. Zn(2+) contacts are provided by cysteine 2011, cysteine 2029, cysteine 2031, and cysteine 2052. The tract at residues glutamate 2120–alanine 2208 is FKBP8-binding. A transcriptional activation region spans residues glutamate 2120–threonine 2332. Residues proline 2135–proline 2139 are interaction with non-structural protein 4A. Residues arginine 2189–proline 2441 are interaction with host SKP2. Phosphoserine; by host; in p56 is present on serine 2194. Phosphoserine; by host; in p58 occurs at positions 2197, 2201, 2204, 2207, and 2210. Residues serine 2210–lysine 2249 form an ISDR region. The interaction with EIF2AK2/PKR stretch occupies residues serine 2210 to leucine 2275. The interval lysine 2249–tyrosine 2306 is NS4B-binding. Residues proline 2322 to proline 2325 carry the SH3-binding motif. The Nuclear localization signal motif lies at proline 2326–valine 2334. A Glycyl lysine isopeptide (Lys-Gly) (interchain with G-Cter in ubiquitin) cross-link involves residue lysine 2350. A compositionally biased stretch (low complexity) spans threonine 2351–alanine 2367. The tract at residues threonine 2351–serine 2409 is disordered. The interval serine 2354 to aspartate 2377 is V3. Phosphoserine; by host occurs at positions 2448 and 2461. The region spanning proline 2633–aspartate 2751 is the RdRp catalytic domain. Residues aspartate 2639, aspartate 2737, and aspartate 2738 each contribute to the Mg(2+) site. The helical transmembrane segment at tryptophan 2990–arginine 3010 threads the bilayer.

It belongs to the hepacivirus polyprotein family. As to quaternary structure, homooligomer. Interacts with E1 (via C-terminus). Interacts with the non-structural protein 5A. Interacts (via N-terminus) with host STAT1 (via SH2 domain); this interaction results in decreased STAT1 phosphorylation and ubiquitin-mediated proteasome-dependent STAT1 degradation, leading to decreased IFN-stimulated gene transcription. Interacts with host STAT3; this interaction constitutively activates STAT3. Interacts with host LTBR receptor. Interacts with host TNFRSF1A receptor and possibly induces apoptosis. Interacts with host HNRPK. Interacts with host YWHAE. Interacts with host UBE3A/E6AP. Interacts with host DDX3X. Interacts with host APOA2. Interacts with host RXRA protein. Interacts with host SP110 isoform 3/Sp110b; this interaction sequesters the transcriptional corepressor SP110 away from the nucleus. Interacts with host CREB3 nuclear transcription protein; this interaction triggers cell transformation. Interacts with host ACY3. Interacts with host C1QR1. Interacts with host RBM24; this interaction, which enhances the interaction of the mature core protein with 5'-UTR, may inhibit viral translation and favor replication. Interacts with host EIF2AK2/PKR; this interaction induces the autophosphorylation of EIF2AK2. Part of the viral assembly initiation complex composed of NS2, E1, E2, NS3, NS4A, NS5A and the mature core protein. In terms of assembly, forms a heterodimer with envelope glycoprotein E2. Interacts with mature core protein. Interacts with protease NS2. The heterodimer E1/E2 interacts with host CLDN1; this interaction plays a role in viral entry into host cell. Interacts with host SPSB2 (via C-terminus). Part of the viral assembly initiation complex composed of NS2, E1, E2, NS3, NS4A, NS5A and the mature core protein. Interacts with host NEURL3; this interaction prevents E1 binding to glycoprotein E2. Forms a heterodimer with envelope glycoprotein E1. Interacts with host CD81 and SCARB1 receptors; these interactions play a role in viral entry into host cell. Interacts with host EIF2AK2/PKR; this interaction inhibits EIF2AK2 and probably allows the virus to evade the innate immune response. Interacts with host CD209/DC-SIGN and CLEC4M/DC-SIGNR. Interact with host SPCS1; this interaction is essential for viral particle assembly. Interacts with protease NS2. The heterodimer E1/E2 interacts with host CLDN1; this interaction plays a role in viral entry into host cell. Part of the viral assembly initiation complex composed of NS2, E1, E2, NS3, NS4A, NS5A and the mature core protein. Interacts with host SLC3A2/4F2hc; the interaction may facilitate viral entry into host cell. Interacts with human PLSCR1. As to quaternary structure, homohexamer. Homoheptamer. Interacts with protease NS2. In terms of assembly, homodimer. Interacts with host SPCS1; this interaction is essential for viral particle assembly. Interacts with envelope glycoprotein E1. Interacts with envelope glycoprotein E2. Interacts with viroporin p7. Interacts with serine protease/helicase NS3. Part of the replication complex composed of NS2, NS3, NS4A, NS4B, NS5A and the RNA-directed RNA polymerase embedded in an ER-derived membranous web. Part of the viral assembly initiation complex composed of NS2, E1, E2, NS3, NS4A, NS5A and the mature core protein. Interacts with protease NS2. Interacts with non-structural protein 4A; this interaction stabilizes the folding of NS3 serine protease. NS3-NS4A interaction is essential for NS3 activation and allows membrane anchorage of the latter. NS3/NS4A complex also prevents phosphorylation of host IRF3, thus preventing the establishment of dsRNA induced antiviral state. Interacts with host MAVS; this interaction leads to the cleavage and inhibition of host MAVS. Interacts with host TICAM1; this interaction leads to the cleavage and inhibition of host TICAM1. Interacts with host TANK-binding kinase/TBK1; this interaction results in the inhibition of the association between TBK1 and IRF3, which leads to the inhibition of IRF3 activation. Interacts with host RBM24. Part of the replication complex composed of NS2, NS3, NS4A, NS4B, NS5A and the RNA-directed RNA polymerase embedded in an ER-derived membranous web. Part of the viral assembly initiation complex composed of NS2, E1, E2, NS3, NS4A, NS5A and the mature core protein. As to quaternary structure, interacts with NS3 serine protease; this interaction stabilizes the folding of NS3 serine protease. NS3-NS4A interaction is essential for NS3 activation and allows membrane anchorage of the latter. Interacts with non-structural protein 5A (via N-terminus). Part of the replication complex composed of NS2, NS3, NS4A, NS4B, NS5A and the RNA-directed RNA polymerase embedded in an ER-derived membranous web. Part of the viral assembly initiation complex composed of NS2, E1, E2, NS3, NS4A, NS5A and the mature core protein. In terms of assembly, homomultimer. Interacts with non-structural protein NS5A. Interacts with host PLA2G4C; this interaction likely initiates the recruitment of replication complexes to lipid droplets. Interacts with host STING; this interaction disrupts the interaction between STING and TBK1 thereby suppressing the interferon signaling. Part of the replication complex composed of NS2, NS3, NS4A, NS4B, NS5A and the RNA-directed RNA polymerase embedded in an ER-derived membranous web. Monomer. Homodimer; dimerization is required for RNA-binding. Interacts with the mature core protein. Interacts (via N-terminus) with non-structural protein 4A. Interacts with non-structural protein 4B. Interacts (via region D2) with RNA-directed RNA polymerase. Part of the viral assembly initiation complex composed of NS2, E1, E2, NS3, NS4A, NS5A and the mature core protein. Part of the replication complex composed of NS2, NS3, NS4A, NS4B, NS5A and the RNA-directed RNA polymerase embedded in an ER-derived membranous web. Interacts with host GRB2. Interacts with host BIN1. Interacts with host PIK3R1. Interacts with host SRCAP. Interacts with host FKBP8. Interacts (via C-terminus) with host VAPB (via MSP domain). Interacts with host EIF2AK2/PKR; this interaction leads to disruption of EIF2AK2 dimerization by NS5A and probably allows the virus to evade the innate immune response. Interacts (via N-terminus) with host PACSIN2 (via N-terminus); this interaction attenuates protein kinase C alpha-mediated phosphorylation of PACSIN2 by disrupting the interaction between PACSIN2 and PRKCA. Interacts (via N-terminus) with host SRC kinase (via SH2 domain). Interacts with most Src-family kinases. Interacts with host IFI27 and SKP2; promotes the ubiquitin-mediated proteasomal degradation of NS5A. Interacts with host GPS2. Interacts with host TNFRSF21; this interaction allows the modulation by the virus of JNK, p38 MAPK, STAT3, and Akt signaling pathways in a DR6-dependent manner. Interacts (via N-terminus) with host CIDEB (via N-terminus); this interaction seems to regulate the association of HCV particles with APOE. Interacts with host CHKA/Choline Kinase-alpha; CHKA bridges host PI4KA and NS5A and potentiates NS5A-stimulated PI4KA activity, which then facilitates the targeting of the ternary complex to the ER for viral replication. Interacts with host SPSB2 (via C-terminus); this interaction targets NS5A for ubiquitination and degradation. Interacts with host RAB18; this interaction may promote the association of NS5A and other replicase components with lipid droplets. Interacts (via region D2) with host PPIA/CYPA; the interaction stimulates RNA-binding ability of NS5A and is dependent on the peptidyl-prolyl cis-trans isomerase activity of PPIA/CYPA. Interacts with host TRIM14; this interaction induces the degradation of NS5A. As to quaternary structure, homooligomer. Interacts with non-structural protein 5A. Interacts with host VAPB. Interacts with host PRK2/PKN2. Interacts with host HNRNPA1 and SEPT6; these interactions facilitate viral replication. Part of the replication complex composed of NS2, NS3, NS4A, NS4B, NS5A and the RNA-directed RNA polymerase. Requires Zn(2+) as cofactor. The cofactor is Mg(2+). In terms of processing, specific enzymatic cleavages in vivo yield mature proteins. The structural proteins, core, E1, E2 and p7 are produced by proteolytic processing by host signal peptidases. The core protein precursor is synthesized as a 23 kDa, which is retained in the ER membrane through the hydrophobic signal peptide. Cleavage by the signal peptidase releases the 21 kDa mature core protein. The cleavage of the core protein precursor occurs between aminoacids 176 and 188 but the exact cleavage site is not known. Some degraded forms of the core protein appear as well during the course of infection. The other proteins (p7, NS2, NS3, NS4A, NS4B, NS5A and NS5B) are cleaved by the viral proteases. Autoprocessing between NS2 and NS3 is mediated by the NS2 cysteine protease catalytic domain and regulated by the NS3 N-terminal domain. Phosphorylated by host PKC and PKA. Post-translationally, ubiquitinated; mediated by UBE3A and leading to core protein subsequent proteasomal degradation. In terms of processing, highly N-glycosylated. Palmitoylation is required for NS2/3 autoprocessing and E2 recruitment to membranes. Post-translationally, palmitoylated. This modification may play a role in its polymerization or in protein-protein interactions. In terms of processing, phosphorylated on serines in a basal form termed p56. p58 is a hyperphosphorylated form of p56. p56 and p58 coexist in the cell in roughly equivalent amounts. Hyperphosphorylation is dependent on the presence of NS4A. Host CSNK1A1/CKI-alpha or RPS6KB1 kinases may be responsible for NS5A phosphorylation. Tyrosine phosphorylation is essential for the interaction with host SRC. Post-translationally, the N-terminus is phosphorylated by host PRK2/PKN2. In terms of processing, ubiquitinated. Ubiquitination, most probably at Lys-2350, mediated by host IFI27 and SKP2 leads to proteasomal degradation, restricting viral infection. Ubiquitination by host TRIM22 leads to interruption of viral replication.

It localises to the host endoplasmic reticulum membrane. Its subcellular location is the host mitochondrion membrane. It is found in the virion. The protein localises to the host cytoplasm. The protein resides in the host nucleus. It localises to the host lipid droplet. Its subcellular location is the virion membrane. It is found in the host mitochondrion. The protein localises to the host cell membrane. The protein resides in the host perinuclear region. The enzyme catalyses Hydrolysis of four peptide bonds in the viral precursor polyprotein, commonly with Asp or Glu in the P6 position, Cys or Thr in P1 and Ser or Ala in P1'.. It carries out the reaction a ribonucleoside 5'-triphosphate + H2O = a ribonucleoside 5'-diphosphate + phosphate + H(+). The catalysed reaction is ATP + H2O = ADP + phosphate + H(+). It catalyses the reaction RNA(n) + a ribonucleoside 5'-triphosphate = RNA(n+1) + diphosphate. Its activity is regulated as follows. Inhibited by the antiviral drug hexamethylene amiloride. Inhibition by amantadine appears to be genotype-dependent. Also inhibited by long-alkyl-chain iminosugar derivatives. With respect to regulation, activity is up-regulated by PRK2/PKN2-mediated phosphorylation. In terms of biological role, packages viral RNA to form a viral nucleocapsid, and promotes virion budding. Participates in the viral particle production as a result of its interaction with the non-structural protein 5A. Binds RNA and may function as a RNA chaperone to induce the RNA structural rearrangements taking place during virus replication. Modulates viral translation initiation by interacting with viral IRES and 40S ribosomal subunit. Affects various cell signaling pathways, host immunity and lipid metabolism. Prevents the establishment of cellular antiviral state by blocking the interferon-alpha/beta (IFN-alpha/beta) and IFN-gamma signaling pathways and by blocking the formation of phosphorylated STAT1 and promoting ubiquitin-mediated proteasome-dependent degradation of STAT1. Activates STAT3 leading to cellular transformation. Regulates the activity of cellular genes, including c-myc and c-fos. May repress the promoter of p53, and sequester CREB3 and SP110 isoform 3/Sp110b in the cytoplasm. Represses cell cycle negative regulating factor CDKN1A, thereby interrupting an important check point of normal cell cycle regulation. Targets transcription factors involved in the regulation of inflammatory responses and in the immune response: suppresses TNF-induced NF-kappa-B activation, and activates AP-1. Binds to dendritic cells (DCs) via C1QR1, resulting in down-regulation of T-lymphocytes proliferation. Alters lipid metabolism by interacting with hepatocellular proteins involved in lipid accumulation and storage. Induces up-regulation of FAS promoter activity, and thereby contributes to the increased triglyceride accumulation in hepatocytes (steatosis). Its function is as follows. Forms a heterodimer with envelope glycoprotein E2, which mediates virus attachment to the host cell, virion internalization through clathrin-dependent endocytosis and fusion with host membrane. Fusion with the host cell is most likely mediated by both E1 and E2, through conformational rearrangements of the heterodimer required for fusion rather than a classical class II fusion mechanism. E1/E2 heterodimer binds host apolipoproteins such as APOB and ApoE thereby forming a lipo-viro-particle (LVP). APOE associated to the LVP allows the initial virus attachment to cell surface receptors such as the heparan sulfate proteoglycans (HSPGs), syndecan-1 (SDC1), syndecan-1 (SDC2), the low-density lipoprotein receptor (LDLR) and scavenger receptor class B type I (SCARB1). The cholesterol transfer activity of SCARB1 allows E2 exposure and binding of E2 to SCARB1 and the tetraspanin CD81. E1/E2 heterodimer binding on CD81 activates the epithelial growth factor receptor (EGFR) signaling pathway. Diffusion of the complex E1-E2-EGFR-SCARB1-CD81 to the cell lateral membrane allows further interaction with Claudin 1 (CLDN1) and occludin (OCLN) to finally trigger HCV entry. Forms a heterodimer with envelope glycoprotein E1, which mediates virus attachment to the host cell, virion internalization through clathrin-dependent endocytosis and fusion with host membrane. Fusion with the host cell is most likely mediated by both E1 and E2, through conformational rearrangements of the heterodimer required for fusion rather than a classical class II fusion mechanism. The interaction between envelope glycoprotein E2 and host apolipoprotein E/APOE allows the proper assembly, maturation and infectivity of the viral particles. This interaction is probably promoted via the up-regulation of cellular autophagy by the virus. E1/E2 heterodimer binds host apolipoproteins such as APOB and APOE thereby forming a lipo-viro-particle (LVP). APOE associated to the LVP allows the initial virus attachment to cell surface receptors such as the heparan sulfate proteoglycans (HSPGs), syndecan-1 (SDC1), syndecan-1 (SDC2), the low-density lipoprotein receptor (LDLR) and scavenger receptor class B type I (SCARB1). The cholesterol transfer activity of SCARB1 allows E2 exposure and binding of E2 to SCARB1 and the tetraspanin CD81. E1/E2 heterodimer binding on CD81 activates the epithelial growth factor receptor (EGFR) signaling pathway. Diffusion of the complex E1-E2-EGFR-SCARB1-CD81 to the cell lateral membrane allows further interaction with Claudin 1 (CLDN1) and occludin (OCLN) to finally trigger HCV entry. Inhibits host EIF2AK2/PKR activation, preventing the establishment of an antiviral state. Viral ligand for CD209/DC-SIGN and CLEC4M/DC-SIGNR, which are respectively found on dendritic cells (DCs), and on liver sinusoidal endothelial cells and macrophage-like cells of lymph node sinuses. These interactions allow the capture of circulating HCV particles by these cells and subsequent facilitated transmission to permissive cells such as hepatocytes and lymphocyte subpopulations. The interaction between E2 and host amino acid transporter complex formed by SLC3A2 and SLC7A5/LAT1 may facilitate viral entry into host cell. Functionally, ion channel protein that acts as a viroporin and plays an essential role in the assembly, envelopment and secretion of viral particles. Regulates the host cell secretory pathway, which induces the intracellular retention of viral glycoproteins and favors assembly of viral particles. Creates a pore in acidic organelles and releases Ca(2+) and H(+) in the cytoplasm of infected cells, leading to a productive viral infection. High levels of cytoplasmic Ca(2+) may trigger membrane trafficking and transport of viral ER-associated proteins to viroplasms, sites of viral genome replication. This ionic imbalance induces the assembly of the inflammasome complex, which triggers the maturation of pro-IL-1beta into IL-1beta through the action of caspase-1. Targets also host mitochondria and induces mitochondrial depolarization. In addition of its role as a viroporin, acts as a lipid raft adhesion factor. In terms of biological role, cysteine protease required for the proteolytic auto-cleavage between the non-structural proteins NS2 and NS3. The N-terminus of NS3 is required for the function of NS2 protease (active region NS2-3). Promotes the initiation of viral particle assembly by mediating the interaction between structural and non-structural proteins. Its function is as follows. Displays three enzymatic activities: serine protease with a chymotrypsin-like fold, NTPase and RNA helicase. NS3 serine protease, in association with NS4A, is responsible for the cleavages of NS3-NS4A, NS4A-NS4B, NS4B-NS5A and NS5A-NS5B. The NS3/NS4A complex prevents phosphorylation of host IRF3, thus preventing the establishment of dsRNA induced antiviral state. The NS3/NS4A complex induces host amino acid transporter component SLC3A2, thus contributing to HCV propagation. NS3 RNA helicase binds to RNA and unwinds both dsDNA and dsRNA in the 3' to 5' direction, and likely resolves RNA complicated stable secondary structures in the template strand. Binds a single ATP and catalyzes the unzipping of a single base pair of dsRNA. Inhibits host antiviral proteins TBK1 and IRF3 thereby preventing the establishment of an antiviral state. Cleaves host MAVS/CARDIF thereby preventing the establishment of an antiviral state. Cleaves host TICAM1/TRIF, thereby disrupting TLR3 signaling and preventing the establishment of an antiviral state. Peptide cofactor which forms a non-covalent complex with the N-terminal of NS3 serine protease. The NS3/NS4A complex prevents phosphorylation of host IRF3, thus preventing the establishment of dsRNA induced antiviral state. The NS3/NS4A complex induces host amino acid transporter component SLC3A2, thus contributing to HCV propagation. Functionally, induces a specific membrane alteration that serves as a scaffold for the virus replication complex. This membrane alteration gives rise to the so-called ER-derived membranous web that contains the replication complex. NS4B self-interaction contributes to its function in membranous web formation. Promotes host TRIF protein degradation in a CASP8-dependent manner thereby inhibiting host TLR3-mediated interferon signaling. Disrupts the interaction between STING and TBK1 contributing to the inhibition of interferon signaling. In terms of biological role, phosphorylated protein that is indispensable for viral replication and assembly. Both hypo- and hyperphosphorylated states are required for the viral life cycle. The hyperphosphorylated form of NS5A is an inhibitor of viral replication. Involved in RNA-binding and especially in binding to the viral genome. Zinc is essential for RNA-binding. Participates in the viral particle production as a result of its interaction with the mature viral core protein. Its interaction with host VAPB may target the viral replication complex to vesicles. Down-regulates viral IRES translation initiation. Mediates interferon resistance, presumably by interacting with and inhibiting host EIF2AK2/PKR. Prevents BIN1-induced apoptosis. Acts as a transcriptional activator of some host genes important for viral replication when localized in the nucleus. Via the interaction with host PACSIN2, modulates lipid droplet formation in order to promote virion assembly. Modulates TNFRSF21/DR6 signaling pathway for viral propagation. Its function is as follows. RNA-dependent RNA polymerase that performs primer-template recognition and RNA synthesis during viral replication. Initiates RNA transcription/replication at a flavin adenine dinucleotide (FAD), resulting in a 5'- FAD cap on viral RNAs. In this way, recognition of viral 5' RNA by host pattern recognition receptors can be bypassed, thereby evading activation of antiviral pathways. This chain is Genome polyprotein, found in Hepatitis C virus genotype 1b (isolate Taiwan) (HCV).